A 258-amino-acid polypeptide reads, in one-letter code: Ferredoxin--NADP reductase (258 aa).

The FAD-binding FR-type domain maps to 2–102 (SNLNVERVLS…RKPTGTLVTS (101 aa)). D17 contributes to the NADP(+) binding site. Residues 51–54 (RAYS), 67–69 (FSI), 74–77 (GPLT), and T117 contribute to the FAD site. NADP(+)-binding positions include 144 to 145 (VR), 181 to 182 (TR), and R190. 254-258 (AFVEK) lines the FAD pocket.

Belongs to the ferredoxin--NADP reductase type 1 family. In terms of assembly, monomer. FAD is required as a cofactor.

It carries out the reaction 2 reduced [2Fe-2S]-[ferredoxin] + NADP(+) + H(+) = 2 oxidized [2Fe-2S]-[ferredoxin] + NADPH. Its function is as follows. Transports electrons between ferredoxin and NADPH. The sequence is that of Ferredoxin--NADP reductase from Azotobacter vinelandii.